The chain runs to 103 residues: UPF0145 protein HH_1800 (103 aa).

The protein belongs to the UPF0145 family.

The chain is UPF0145 protein HH_1800 from Helicobacter hepaticus (strain ATCC 51449 / 3B1).